Reading from the N-terminus, the 808-residue chain is Probable potassium transporter 3 (808 aa).

The Cytoplasmic segment spans residues 1–34 (MPVADCESGLSPADVTGAGAANGNPGHWRSYYRH). The chain crosses the membrane as a helical span at residues 35 to 55 (VLLLAYQSCGVVYGDLSTSPL). Topologically, residues 56 to 81 (YVYKSTFIIGSLRRFQDEEIVFGVFS) are extracellular. Residues 82 to 102 (LVFWTLTLIPLLKYVFIVLAA) form a helical membrane-spanning segment. Over 103–167 (DDNGEGGTFA…FLENHRKSRT (65 aa)) the chain is Cytoplasmic. The helical transmembrane segment at 168-188 (FLLVTVLFGASLVIGDGVLTP) threads the bilayer. At 189–204 (PMSVLSSFSGLQVHST) the chain is on the extracellular side. Residues 205–225 (ALTSGEVEILSCTVLVCLFMV) traverse the membrane as a helical segment. Over 226–232 (QHWGTHR) the chain is Cytoplasmic. The helical transmembrane segment at 233-253 (VAFLFAPVVIVWLLLLGALGV) threads the bilayer. At 254–283 (YNIVVWNPRVLRALSPYYLVRFFQHTGKDG) the chain is on the extracellular side. A helical transmembrane segment spans residues 284-304 (WISLGGILLSMTGTEAMYADL). Topologically, residues 305 to 313 (GHFTAASIR) are cytoplasmic. The helical transmembrane segment at 314–334 (VAFVGLIYPCLVLQYMGQAAF) threads the bilayer. Residues 335–354 (LSKSPHCDIHFVFFESIPTG) lie on the Extracellular side of the membrane. The helical transmembrane segment at 355-375 (IFWPVLVIATLAAIVGSQAVI) threads the bilayer. The Cytoplasmic portion of the chain corresponds to 376–406 (SATFSIVRQCTALGCFPRVKIVHTSRRIHGQ). A helical membrane pass occupies residues 407 to 427 (IYSPEINWILMLLCIAVTMGL). The Extracellular segment spans residues 428-439 (RDTTLIGNAYGM). Residues 440 to 460 (ACAGVMLVTTLLMALVIVFVW) form a helical membrane-spanning segment. The Cytoplasmic portion of the chain corresponds to 461 to 464 (QYSC). A helical transmembrane segment spans residues 465 to 485 (LVAALFLVAFGVVEAVYLSAA). The Extracellular portion of the chain corresponds to 486–491 (LMKVPQ). The chain crosses the membrane as a helical span at residues 492–512 (GGWLPLVLSLVFVAVMYVWHY). Topologically, residues 513–808 (GTRRKHQFDV…LIEVGMIYYV (296 aa)) are cytoplasmic.

This sequence belongs to the HAK/KUP transporter (TC 2.A.72.3) family.

It is found in the membrane. Functionally, high-affinity potassium transporter. This is Probable potassium transporter 3 (HAK3) from Oryza sativa subsp. japonica (Rice).